Here is a 363-residue protein sequence, read N- to C-terminus: Protein LEG1 homolog (363 aa).

The first 19 residues, 1 to 19 (MQCVWTLSLLQLVALWANA), serve as a signal peptide directing secretion. N-linked (GlcNAc...) asparagine glycans are attached at residues Asn-79, Asn-261, and Asn-292.

The protein belongs to the LEG1 family.

The protein resides in the secreted. Functionally, may be involved in early liver development. In Oncorhynchus mykiss (Rainbow trout), this protein is Protein LEG1 homolog.